Consider the following 246-residue polypeptide: Probable transcriptional regulatory protein CA_C2295 (246 aa).

Belongs to the TACO1 family.

The protein localises to the cytoplasm. The sequence is that of Probable transcriptional regulatory protein CA_C2295 from Clostridium acetobutylicum (strain ATCC 824 / DSM 792 / JCM 1419 / IAM 19013 / LMG 5710 / NBRC 13948 / NRRL B-527 / VKM B-1787 / 2291 / W).